We begin with the raw amino-acid sequence, 1704 residues long: Nonribosomal peptide synthetase ivoA (1704 aa).

Residues 234–620 (EEQAIARPDQ…HGRKDLEVKI (387 aa)) form an adenylation region. The Carrier domain occupies 748–827 (NLISDPSDSM…EMATKTSAVE (80 aa)). Ser785 carries the O-(pantetheine 4'-phosphoryl)serine modification. An epimerization (E) domain region spans residues 840 to 1266 (FPLSPVQQMY…QELLETAVER (427 aa)). The segment at 1325–1477 (VQGDWTIEKT…AQSSTPSARK (153 aa)) is condensation.

It belongs to the NRP synthetase family.

The catalysed reaction is L-tryptophan + ATP + H2O = D-tryptophan + AMP + diphosphate + H(+). Its pathway is pigment biosynthesis. Nonribosomal peptide synthetase; part of the pathway that mediates the biosynthesis of the gray-brown conidiophore pigment. The first step of the pathway is performed by the nonribosomal peptide synthetase ivoA that catalyzes ATP-dependent unidirectional stereoinversion of L-tryptophan to D-tryptophan with complete conversion. While the stereoinversion is catalyzed by the epimerization (E) domain of ivoA, the terminal condensation (C) domain stereoselectively hydrolyzes D-tryptophanyl-S-phosphopantetheine thioester and thus represents a non-canonical C domain function. D-tryptophan is acetylated, probably by an endogenous acetyltransferase. N-acetyltryptophan is further 6-hydroxylated into N-acetyl-6-hydroxytryptophan (AHT) by the cytochrome P450 monooxygenase ivoC. N-acetyl-6-hydroxytryptophan is substrate of the N-acetyl-6-hydroxytryptophan oxidase ivoB to produce the gray-brown conidiophore pigment. This is Nonribosomal peptide synthetase ivoA from Emericella nidulans (strain FGSC A4 / ATCC 38163 / CBS 112.46 / NRRL 194 / M139) (Aspergillus nidulans).